The chain runs to 335 residues: Holliday junction branch migration complex subunit RuvB (335 aa).

A large ATPase domain (RuvB-L) region spans residues 1–181; it reads MSERVISPEP…FGLLIRLNLY (181 aa). Residues Leu-20, Arg-21, Gly-62, Lys-65, Thr-66, Thr-67, 128-130, Arg-171, Tyr-181, and Arg-218 contribute to the ATP site; that span reads EDF. Mg(2+) is bound at residue Thr-66. The segment at 182-252 is small ATPAse domain (RuvB-S); that stretch reads SPEDLEKIVT…IAGAGLALLQ (71 aa). Positions 255 to 335 are head domain (RuvB-H); that stretch reads ELGLDDIDRR…KLNHSQKTLF (81 aa). The DNA site is built by Arg-310 and Arg-315.

It belongs to the RuvB family. As to quaternary structure, homohexamer. Forms an RuvA(8)-RuvB(12)-Holliday junction (HJ) complex. HJ DNA is sandwiched between 2 RuvA tetramers; dsDNA enters through RuvA and exits via RuvB. An RuvB hexamer assembles on each DNA strand where it exits the tetramer. Each RuvB hexamer is contacted by two RuvA subunits (via domain III) on 2 adjacent RuvB subunits; this complex drives branch migration. In the full resolvosome a probable DNA-RuvA(4)-RuvB(12)-RuvC(2) complex forms which resolves the HJ.

The protein localises to the cytoplasm. The catalysed reaction is ATP + H2O = ADP + phosphate + H(+). In terms of biological role, the RuvA-RuvB-RuvC complex processes Holliday junction (HJ) DNA during genetic recombination and DNA repair, while the RuvA-RuvB complex plays an important role in the rescue of blocked DNA replication forks via replication fork reversal (RFR). RuvA specifically binds to HJ cruciform DNA, conferring on it an open structure. The RuvB hexamer acts as an ATP-dependent pump, pulling dsDNA into and through the RuvAB complex. RuvB forms 2 homohexamers on either side of HJ DNA bound by 1 or 2 RuvA tetramers; 4 subunits per hexamer contact DNA at a time. Coordinated motions by a converter formed by DNA-disengaged RuvB subunits stimulates ATP hydrolysis and nucleotide exchange. Immobilization of the converter enables RuvB to convert the ATP-contained energy into a lever motion, pulling 2 nucleotides of DNA out of the RuvA tetramer per ATP hydrolyzed, thus driving DNA branch migration. The RuvB motors rotate together with the DNA substrate, which together with the progressing nucleotide cycle form the mechanistic basis for DNA recombination by continuous HJ branch migration. Branch migration allows RuvC to scan DNA until it finds its consensus sequence, where it cleaves and resolves cruciform DNA. In Methanoregula boonei (strain DSM 21154 / JCM 14090 / 6A8), this protein is Holliday junction branch migration complex subunit RuvB.